Consider the following 334-residue polypeptide: Ketol-acid reductoisomerase (NADP(+)) (334 aa).

A KARI N-terminal Rossmann domain is found at 1–181; sequence MTTVYYDQDV…GATRAGVIET (181 aa). Residues 25–28, arginine 48, serine 52, and 82–85 each bind NADP(+); these read YGSQ and DEIQ. Residue histidine 107 is part of the active site. Glycine 133 is a binding site for NADP(+). The region spanning 182-327 is the KARI C-terminal knotted domain; it reads TFKEETETDL…RELREMMPFI (146 aa). Aspartate 190, glutamate 194, glutamate 226, and glutamate 230 together coordinate Mg(2+). Position 251 (serine 251) interacts with substrate.

This sequence belongs to the ketol-acid reductoisomerase family. Mg(2+) is required as a cofactor.

It carries out the reaction (2R)-2,3-dihydroxy-3-methylbutanoate + NADP(+) = (2S)-2-acetolactate + NADPH + H(+). The enzyme catalyses (2R,3R)-2,3-dihydroxy-3-methylpentanoate + NADP(+) = (S)-2-ethyl-2-hydroxy-3-oxobutanoate + NADPH + H(+). The protein operates within amino-acid biosynthesis; L-isoleucine biosynthesis; L-isoleucine from 2-oxobutanoate: step 2/4. Its pathway is amino-acid biosynthesis; L-valine biosynthesis; L-valine from pyruvate: step 2/4. Involved in the biosynthesis of branched-chain amino acids (BCAA). Catalyzes an alkyl-migration followed by a ketol-acid reduction of (S)-2-acetolactate (S2AL) to yield (R)-2,3-dihydroxy-isovalerate. In the isomerase reaction, S2AL is rearranged via a Mg-dependent methyl migration to produce 3-hydroxy-3-methyl-2-ketobutyrate (HMKB). In the reductase reaction, this 2-ketoacid undergoes a metal-dependent reduction by NADPH to yield (R)-2,3-dihydroxy-isovalerate. The polypeptide is Ketol-acid reductoisomerase (NADP(+)) (Staphylococcus aureus (strain USA300)).